The primary structure comprises 463 residues: Phosphomannomutase (463 aa).

Serine 103 functions as the Phosphoserine intermediate in the catalytic mechanism. 4 residues coordinate Mg(2+): serine 103, aspartate 248, aspartate 250, and aspartate 252.

This sequence belongs to the phosphohexose mutase family. Mg(2+) is required as a cofactor.

It localises to the cell membrane. The catalysed reaction is alpha-D-mannose 1-phosphate = D-mannose 6-phosphate. The protein operates within nucleotide-sugar biosynthesis; GDP-alpha-D-mannose biosynthesis; alpha-D-mannose 1-phosphate from D-fructose 6-phosphate: step 2/2. It participates in bacterial outer membrane biogenesis; LPS O-antigen biosynthesis. Functionally, involved in GDP-mannose biosynthesis which serves as the activated sugar nucleotide precursor for mannose residues in cell surface polysaccharides. In Vibrio cholerae serotype O1 (strain ATCC 39315 / El Tor Inaba N16961), this protein is Phosphomannomutase (rfbB).